The chain runs to 366 residues: tRNA/tmRNA (uracil-C(5))-methyltransferase (366 aa).

5 residues coordinate S-adenosyl-L-methionine: Q190, Y218, N223, E239, and D299. C324 acts as the Nucleophile in catalysis. E358 functions as the Proton acceptor in the catalytic mechanism.

The protein belongs to the class I-like SAM-binding methyltransferase superfamily. RNA M5U methyltransferase family. TrmA subfamily.

It carries out the reaction uridine(54) in tRNA + S-adenosyl-L-methionine = 5-methyluridine(54) in tRNA + S-adenosyl-L-homocysteine + H(+). It catalyses the reaction uridine(341) in tmRNA + S-adenosyl-L-methionine = 5-methyluridine(341) in tmRNA + S-adenosyl-L-homocysteine + H(+). Its function is as follows. Dual-specificity methyltransferase that catalyzes the formation of 5-methyluridine at position 54 (m5U54) in all tRNAs, and that of position 341 (m5U341) in tmRNA (transfer-mRNA). The protein is tRNA/tmRNA (uracil-C(5))-methyltransferase of Escherichia coli (strain ATCC 8739 / DSM 1576 / NBRC 3972 / NCIMB 8545 / WDCM 00012 / Crooks).